Reading from the N-terminus, the 386-residue chain is Phosphoglycerate kinase (386 aa).

Residues 21 to 23 (DLN), Arg-36, 59 to 62 (HLGR), Arg-113, and Arg-146 contribute to the substrate site. Residues Lys-197, Glu-314, and 340-343 (GGDT) each bind ATP.

This sequence belongs to the phosphoglycerate kinase family. As to quaternary structure, monomer.

The protein resides in the cytoplasm. The enzyme catalyses (2R)-3-phosphoglycerate + ATP = (2R)-3-phospho-glyceroyl phosphate + ADP. The protein operates within carbohydrate degradation; glycolysis; pyruvate from D-glyceraldehyde 3-phosphate: step 2/5. This is Phosphoglycerate kinase from Marinobacter nauticus (strain ATCC 700491 / DSM 11845 / VT8) (Marinobacter aquaeolei).